The sequence spans 546 residues: NAD(P)H-quinone oxidoreductase chain 4 (546 aa).

The next 14 membrane-spanning stretches (helical) occupy residues 17 to 37 (VPWL…VPFI), 48 to 68 (WYAL…YLNG), 103 to 123 (LILL…PVSF), 127 to 147 (LFYF…AVQD), 149 to 169 (LLFF…LAIW), 181 to 201 (FILY…AMGF), 222 to 242 (GFQL…LPIV), 256 to 276 (TAPV…YALL), 290 to 310 (FAPL…LTSF), 327 to 347 (MGFV…GAML), 348 to 368 (QMIS…ATYD), 389 to 409 (FALW…SGFV), 430 to 450 (VVIC…LLSM), and 477 to 497 (VYII…PRLM).

It belongs to the complex I subunit 4 family.

Its subcellular location is the cellular thylakoid membrane. The catalysed reaction is a plastoquinone + NADH + (n+1) H(+)(in) = a plastoquinol + NAD(+) + n H(+)(out). It carries out the reaction a plastoquinone + NADPH + (n+1) H(+)(in) = a plastoquinol + NADP(+) + n H(+)(out). Its function is as follows. NDH-1 shuttles electrons from NAD(P)H, via FMN and iron-sulfur (Fe-S) centers, to quinones in the respiratory chain. The immediate electron acceptor for the enzyme in this species is believed to be plastoquinone. Couples the redox reaction to proton translocation (for every two electrons transferred, four hydrogen ions are translocated across the cytoplasmic membrane), and thus conserves the redox energy in a proton gradient. The chain is NAD(P)H-quinone oxidoreductase chain 4 from Parasynechococcus marenigrum (strain WH8102).